A 37-amino-acid polypeptide reads, in one-letter code: Cytochrome b6-f complex subunit 5 (37 aa).

Residues 5 to 25 (ILLGIVLGMVVVTLAGLFVAA) form a helical membrane-spanning segment.

Belongs to the PetG family. The 4 large subunits of the cytochrome b6-f complex are cytochrome b6, subunit IV (17 kDa polypeptide, PetD), cytochrome f and the Rieske protein, while the 4 small subunits are PetG, PetL, PetM and PetN. The complex functions as a dimer.

The protein resides in the cellular thylakoid membrane. Component of the cytochrome b6-f complex, which mediates electron transfer between photosystem II (PSII) and photosystem I (PSI), cyclic electron flow around PSI, and state transitions. PetG is required for either the stability or assembly of the cytochrome b6-f complex. This is Cytochrome b6-f complex subunit 5 from Synechococcus sp. (strain JA-2-3B'a(2-13)) (Cyanobacteria bacterium Yellowstone B-Prime).